A 139-amino-acid chain; its full sequence is uncharacterized protein (139 aa).

The span at 1–11 shows a compositional bias: polar residues; it reads MALSMSLSSDI. Disordered regions lie at residues 1-80 and 100-139; these read MALS…AAAA and ASSP…LARS. Residues 63 to 80 show a composition bias toward low complexity; it reads GAGSASAGGSRLAAAAAA.

This is an uncharacterized protein from Homo sapiens (Human).